Here is a 358-residue protein sequence, read N- to C-terminus: 3-dehydroquinate synthase (358 aa).

NAD(+)-binding positions include 70-75, 104-108, 128-129, Lys-141, Lys-150, and 168-171; these read DGEQYK, GVIGD, TT, and CLST. Positions 183, 246, and 263 each coordinate Zn(2+).

Belongs to the sugar phosphate cyclases superfamily. Dehydroquinate synthase family. Requires Co(2+) as cofactor. Zn(2+) serves as cofactor. NAD(+) is required as a cofactor.

Its subcellular location is the cytoplasm. It catalyses the reaction 7-phospho-2-dehydro-3-deoxy-D-arabino-heptonate = 3-dehydroquinate + phosphate. Its pathway is metabolic intermediate biosynthesis; chorismate biosynthesis; chorismate from D-erythrose 4-phosphate and phosphoenolpyruvate: step 2/7. Catalyzes the conversion of 3-deoxy-D-arabino-heptulosonate 7-phosphate (DAHP) to dehydroquinate (DHQ). The protein is 3-dehydroquinate synthase of Shewanella woodyi (strain ATCC 51908 / MS32).